The chain runs to 148 residues: Myosin light chain 3, skeletal muscle isoform (148 aa).

N-acetylthreonine is present on Thr1. 2 consecutive EF-hand domains span residues Asp6–Asn41 and Gly82–Lys117.

Myosin is a hexamer of 2 heavy chains and 4 light chains.

The sequence is that of Myosin light chain 3, skeletal muscle isoform from Chelon ramada (Thin-lipped grey mullet).